Consider the following 164-residue polypeptide: MFFASSLIFPFYILFVKNIGSSYTQFGFSYGLFGLSGALIYPLLGRLSERFDSRYFLLLNSWGMAVLLLYVPHIGSVVQVYIVQVLLGLFGAMQKHGEKVLIANFTDSGERGKKIGNYHFWTAVFSAAAIMLGGFLADFFTVQMIFYASSILYFLSGLMMMKTG.

The next 4 membrane-spanning stretches (helical) occupy residues 25 to 45, 63 to 83, 120 to 140, and 141 to 161; these read QFGF…PLLG, GMAV…VYIV, FWTA…ADFF, and TVQM…LMMM.

It belongs to the major facilitator superfamily.

Its subcellular location is the cell membrane. This is an uncharacterized protein from Bacillus subtilis (strain 168).